The sequence spans 336 residues: Small ribosomal subunit protein RACK1y (336 aa).

WD repeat units lie at residues 15–55 (GHND…TAVA), 74–113 (GHSHFVQDVVLSSDGQFALSGSWDGELRLWDLATGRTTRR), 116–155 (GHTKDVLSVAFSVDNRQIVSAARDNTIKLWNTLGECKYTI), 164–205 (GHTG…LRTK), 208–247 (GHNGYVNAVAVSPDGSLCASGGKDGTTLLWDLTEGKMLYK), 249–287 (DAGAIIHSLCFSPNRYWLCAATEDSVKIWDLESKLVMQD), and 297–336 (SQMLYCTSLSWSADGSTLFAGYTDGTIRVWKVSGFGGYAI).

The protein belongs to the WD repeat G protein beta family. Ribosomal protein RACK1 subfamily. Homodimer and heterodimer with RACK1A.

Its function is as follows. Component of the RACK1 regulatory proteins that play a role in multiple signal transduction pathways. The chain is Small ribosomal subunit protein RACK1y (RACK1B) from Oryza sativa subsp. japonica (Rice).